Consider the following 188-residue polypeptide: dCTP deaminase (188 aa).

DCTP is bound by residues 111–116 (KSTYAR), 135–137 (TLE), Gln-156, Tyr-170, and Gln-180. The active-site Proton donor/acceptor is the Glu-137.

This sequence belongs to the dCTP deaminase family. In terms of assembly, homotrimer.

The enzyme catalyses dCTP + H2O + H(+) = dUTP + NH4(+). Its pathway is pyrimidine metabolism; dUMP biosynthesis; dUMP from dCTP (dUTP route): step 1/2. Catalyzes the deamination of dCTP to dUTP. In Neisseria meningitidis serogroup C / serotype 2a (strain ATCC 700532 / DSM 15464 / FAM18), this protein is dCTP deaminase.